Reading from the N-terminus, the 408-residue chain is Aminomethyltransferase, mitochondrial (408 aa).

Residues 1–30 (MRGGGLWQLGQSVTRRLAQAEKKVIARRCF) constitute a mitochondrion transit peptide. Substrate is bound by residues glutamate 235, arginine 266, and tyrosine 404.

Belongs to the GcvT family. As to quaternary structure, the glycine cleavage system is composed of four proteins: P, T, L and H.

Its subcellular location is the mitochondrion. It catalyses the reaction N(6)-[(R)-S(8)-aminomethyldihydrolipoyl]-L-lysyl-[protein] + (6S)-5,6,7,8-tetrahydrofolate = N(6)-[(R)-dihydrolipoyl]-L-lysyl-[protein] + (6R)-5,10-methylene-5,6,7,8-tetrahydrofolate + NH4(+). In terms of biological role, the glycine cleavage system catalyzes the degradation of glycine. The chain is Aminomethyltransferase, mitochondrial (GDCST) from Mesembryanthemum crystallinum (Common ice plant).